We begin with the raw amino-acid sequence, 427 residues long: cAMP-dependent protein kinase regulatory subunit (427 aa).

The tract at residues 38–184 (QFCSNFFIRK…RIKVSISNNF (147 aa)) is dimerization and phosphorylation. The tract at residues 96–145 (TTHMGHPNDHGALHDDDDDPLEDEDDEEFDKFSTEPLPSLPPTNYNRGRR) is disordered. A compositionally biased stretch (acidic residues) spans 110 to 124 (DDDDDPLEDEDDEEF). S147 bears the Phosphoserine mark. 3',5'-cyclic AMP is bound by residues 185–300 (LFRN…FLSE), E250, R259, 303–422 (LLKS…YHAV), E372, and R381.

It belongs to the cAMP-dependent kinase regulatory chain family. In terms of assembly, tetramer, composed of 2 regulatory (R) and 2 catalytic (C) subunits. In the presence of cAMP it dissociates into 2 active monomeric C subunits and an R dimer.

This is cAMP-dependent protein kinase regulatory subunit (pkar) from Mucor circinelloides f. lusitanicus (Mucor racemosus var. lusitanicus).